We begin with the raw amino-acid sequence, 409 residues long: ORC1-type DNA replication protein 1 (409 aa).

ATP is bound by residues 63 to 67 (TGKTA), Y206, and R218.

It belongs to the CDC6/cdc18 family.

Functionally, involved in regulation of DNA replication. This chain is ORC1-type DNA replication protein 1 (cdc6-1), found in Archaeoglobus fulgidus (strain ATCC 49558 / DSM 4304 / JCM 9628 / NBRC 100126 / VC-16).